The sequence spans 225 residues: Lipoprotein-releasing system ATP-binding protein LolD (225 aa).

Positions 5–225 (LEVMDLTKGY…RLVDGRVVAD (221 aa)) constitute an ABC transporter domain. 41–48 (GASGTGKS) lines the ATP pocket.

Belongs to the ABC transporter superfamily. Lipoprotein translocase (TC 3.A.1.125) family. As to quaternary structure, the complex is composed of two ATP-binding proteins (LolD) and two transmembrane proteins (LolC and LolE).

Its subcellular location is the cell inner membrane. Part of the ABC transporter complex LolCDE involved in the translocation of mature outer membrane-directed lipoproteins, from the inner membrane to the periplasmic chaperone, LolA. Responsible for the formation of the LolA-lipoprotein complex in an ATP-dependent manner. In Geobacter metallireducens (strain ATCC 53774 / DSM 7210 / GS-15), this protein is Lipoprotein-releasing system ATP-binding protein LolD.